A 494-amino-acid polypeptide reads, in one-letter code: Rhamnulokinase (494 aa).

18–22 (ASSGR) contacts ATP. Substrate-binding positions include G87 and 242–244 (HDT). The active-site Proton acceptor is the D243. T265 serves as a coordination point for ATP. N302 is a substrate binding site. Q310 contributes to the ATP binding site. A disulfide bridge links C360 with C377. An ATP-binding site is contributed by G411.

Belongs to the rhamnulokinase family. Mg(2+) is required as a cofactor.

The catalysed reaction is L-rhamnulose + ATP = L-rhamnulose 1-phosphate + ADP + H(+). It functions in the pathway carbohydrate degradation; L-rhamnose degradation; glycerone phosphate from L-rhamnose: step 2/3. Its function is as follows. Involved in the catabolism of L-rhamnose (6-deoxy-L-mannose). Catalyzes the transfer of the gamma-phosphate group from ATP to the 1-hydroxyl group of L-rhamnulose to yield L-rhamnulose 1-phosphate. This Enterococcus faecalis (strain ATCC 700802 / V583) protein is Rhamnulokinase.